We begin with the raw amino-acid sequence, 273 residues long: 3-methyl-2-oxobutanoate hydroxymethyltransferase 3 (273 aa).

Residues aspartate 49 and aspartate 88 each coordinate Mg(2+). 3-methyl-2-oxobutanoate-binding positions include 49 to 50 (DS), aspartate 88, and lysine 118. Glutamate 120 is a Mg(2+) binding site. The Proton acceptor role is filled by glutamate 187.

It belongs to the PanB family. Homodecamer; pentamer of dimers. Mg(2+) serves as cofactor.

It is found in the cytoplasm. The enzyme catalyses 3-methyl-2-oxobutanoate + (6R)-5,10-methylene-5,6,7,8-tetrahydrofolate + H2O = 2-dehydropantoate + (6S)-5,6,7,8-tetrahydrofolate. It participates in cofactor biosynthesis; (R)-pantothenate biosynthesis; (R)-pantoate from 3-methyl-2-oxobutanoate: step 1/2. In terms of biological role, catalyzes the reversible reaction in which hydroxymethyl group from 5,10-methylenetetrahydrofolate is transferred onto alpha-ketoisovalerate to form ketopantoate. This Bradyrhizobium diazoefficiens (strain JCM 10833 / BCRC 13528 / IAM 13628 / NBRC 14792 / USDA 110) protein is 3-methyl-2-oxobutanoate hydroxymethyltransferase 3.